We begin with the raw amino-acid sequence, 94 residues long: DNA-binding protein HU (94 aa).

This sequence belongs to the bacterial histone-like protein family. As to quaternary structure, homodimer.

Functionally, histone-like DNA-binding protein which is capable of wrapping DNA to stabilize it, and thus to prevent its denaturation under extreme environmental conditions. The protein is DNA-binding protein HU (hup) of Helicobacter pylori (strain J99 / ATCC 700824) (Campylobacter pylori J99).